The sequence spans 528 residues: Bifunctional dihydrofolate reductase-thymidylate synthase (528 aa).

Residues 1–20 form a disordered region; that stretch reads MASELLANPTNGSGITRPDP. One can recognise a DHFR domain in the interval 23 to 200; that stretch reads TYQVVVAATQ…IRYCFTTYVR (178 aa). Position 27 (Val-27) interacts with substrate. Residues Ala-29 and 35–41 each bind NADP(+); that span reads GIGKDGK. Position 49 (Asp-49) interacts with substrate. NADP(+)-binding positions include 73-75 and 94-97; these read RKT and LTRS. Positions 136, 142, and 157 each coordinate substrate. Residue 137-144 participates in NADP(+) binding; sequence GGGQIYRE. The tract at residues 202 to 528 is thymidylate synthase; sequence RNSVAELTSQ…HQKIEMKMAV (327 aa). DUMP is bound at residue Arg-264. Residue Cys-409 is part of the active site. DUMP contacts are provided by residues His-410, 428 to 432, Asn-440, and 470 to 472; these read QRSAD and HVY.

It in the N-terminal section; belongs to the dihydrofolate reductase family. The protein in the C-terminal section; belongs to the thymidylate synthase family.

The enzyme catalyses (6S)-5,6,7,8-tetrahydrofolate + NADP(+) = 7,8-dihydrofolate + NADPH + H(+). It carries out the reaction dUMP + (6R)-5,10-methylene-5,6,7,8-tetrahydrofolate = 7,8-dihydrofolate + dTMP. Its pathway is cofactor biosynthesis; tetrahydrofolate biosynthesis; 5,6,7,8-tetrahydrofolate from 7,8-dihydrofolate: step 1/1. In terms of biological role, bifunctional enzyme. Involved in de novo dTMP biosynthesis. Key enzyme in folate metabolism. Can play two different roles depending on the source of dihydrofolate: de novo synthesis of tetrahydrofolate or recycling of the dihydrofolate released as one of the end products of the TS catalyzed reaction. Catalyzes an essential reaction for de novo glycine and purine synthesis, DNA precursor synthesis, and for the conversion of dUMP to dTMP. This chain is Bifunctional dihydrofolate reductase-thymidylate synthase, found in Daucus carota (Wild carrot).